Here is a 303-residue protein sequence, read N- to C-terminus: Bifunctional protein FolD (303 aa).

Residues 175-177 (GVS) and Ile-243 contribute to the NADP(+) site.

The protein belongs to the tetrahydrofolate dehydrogenase/cyclohydrolase family. As to quaternary structure, homodimer.

It carries out the reaction (6R)-5,10-methylene-5,6,7,8-tetrahydrofolate + NADP(+) = (6R)-5,10-methenyltetrahydrofolate + NADPH. The enzyme catalyses (6R)-5,10-methenyltetrahydrofolate + H2O = (6R)-10-formyltetrahydrofolate + H(+). It participates in one-carbon metabolism; tetrahydrofolate interconversion. Its function is as follows. Catalyzes the oxidation of 5,10-methylenetetrahydrofolate to 5,10-methenyltetrahydrofolate and then the hydrolysis of 5,10-methenyltetrahydrofolate to 10-formyltetrahydrofolate. This Xanthomonas oryzae pv. oryzae (strain PXO99A) protein is Bifunctional protein FolD.